The sequence spans 458 residues: uncharacterized protein (458 aa).

Residues 8–66 enclose the TRAM domain; the sequence is PVEKNEFIDVVFEDLTHDGAGVAKVKGYPIFVKNGLPGEEAQIKIIKVKKNFAFGRLMK. [4Fe-4S] cluster contacts are provided by cysteine 79, cysteine 85, cysteine 88, and cysteine 166. Residues glutamine 290, tyrosine 319, glutamate 340, and aspartate 388 each coordinate S-adenosyl-L-methionine. The active-site Nucleophile is cysteine 415.

Belongs to the class I-like SAM-binding methyltransferase superfamily. RNA M5U methyltransferase family.

This is an uncharacterized protein from Bacillus cereus (strain ATCC 14579 / DSM 31 / CCUG 7414 / JCM 2152 / NBRC 15305 / NCIMB 9373 / NCTC 2599 / NRRL B-3711).